The following is a 613-amino-acid chain: Protein ECM3 (613 aa).

4 helical membrane-spanning segments follow: residues 10-30 (IWAS…GFGL), 74-94 (GIIC…AFIV), 106-126 (GGIL…AYLQ), and 143-163 (VANV…LGGF). Residues 177-256 (DEENTLTNDD…PAIDDRSSNS (80 aa)) form a disordered region. Polar residues-rich tracts occupy residues 187–206 (SAQQ…SNQD) and 213–226 (ESTV…SYIS). 2 positions are modified to phosphoserine: S291 and S338. A disordered region spans residues 345–366 (RRRKSSISSQGAPSVLQADGTI). 4 helical membrane passes run 432-452 (MAVI…LFVT), 471-491 (FIMD…LILL), 546-566 (MLLF…LIYF), and 587-607 (FLML…SYFI).

The protein localises to the endoplasmic reticulum membrane. Functionally, may be involved in cell wall organization and biogenesis. This is Protein ECM3 (ECM3) from Saccharomyces cerevisiae (strain ATCC 204508 / S288c) (Baker's yeast).